The chain runs to 339 residues: Cathepsin B (339 aa).

The first 17 residues, 1–17, serve as a signal peptide directing secretion; the sequence is MWWLWASLCCLLALGDA. A propeptide spans 18–79 (activation peptide); the sequence is RSRPSFHPLS…QRVMFTEDLK (62 aa). 6 disulfides stabilise this stretch: Cys-93-Cys-122, Cys-105-Cys-150, Cys-141-Cys-207, Cys-142-Cys-146, Cys-179-Cys-211, and Cys-187-Cys-198. Cys-108 is an active-site residue. Residue Asn-192 is glycosylated (N-linked (GlcNAc...) asparagine). The residue at position 220 (Lys-220) is an N6-acetyllysine. Catalysis depends on residues His-278 and Asn-298. The propeptide occupies 334 to 339; that stretch reads QYWEKI.

Belongs to the peptidase C1 family. Dimer of a heavy chain and a light chain cross-linked by a disulfide bond. Interacts with SRPX2. Directly interacts with SHKBP1.

It is found in the lysosome. The protein localises to the melanosome. Its subcellular location is the secreted. The protein resides in the extracellular space. It localises to the apical cell membrane. It catalyses the reaction Hydrolysis of proteins with broad specificity for peptide bonds. Preferentially cleaves -Arg-Arg-|-Xaa bonds in small molecule substrates (thus differing from cathepsin L). In addition to being an endopeptidase, shows peptidyl-dipeptidase activity, liberating C-terminal dipeptides.. In terms of biological role, thiol protease which is believed to participate in intracellular degradation and turnover of proteins. Cleaves matrix extracellular phosphoglycoprotein MEPE. Involved in the solubilization of cross-linked TG/thyroglobulin in the thyroid follicle lumen. Has also been implicated in tumor invasion and metastasis. The chain is Cathepsin B (CTSB) from Macaca fascicularis (Crab-eating macaque).